The following is a 477-amino-acid chain: Bifunctional protein HldE (477 aa).

The tract at residues 1–318 (MKLSMPRFDQ…RAIQREEGSE (318 aa)) is ribokinase. 194–197 (NLSE) serves as a coordination point for ATP. D263 is a catalytic residue. A cytidylyltransferase region spans residues 343–477 (FTNGCFDILH…EKIRKTDKAE (135 aa)).

It in the N-terminal section; belongs to the carbohydrate kinase PfkB family. The protein in the C-terminal section; belongs to the cytidylyltransferase family. In terms of assembly, homodimer.

It carries out the reaction D-glycero-beta-D-manno-heptose 7-phosphate + ATP = D-glycero-beta-D-manno-heptose 1,7-bisphosphate + ADP + H(+). It catalyses the reaction D-glycero-beta-D-manno-heptose 1-phosphate + ATP + H(+) = ADP-D-glycero-beta-D-manno-heptose + diphosphate. It functions in the pathway nucleotide-sugar biosynthesis; ADP-L-glycero-beta-D-manno-heptose biosynthesis; ADP-L-glycero-beta-D-manno-heptose from D-glycero-beta-D-manno-heptose 7-phosphate: step 1/4. It participates in nucleotide-sugar biosynthesis; ADP-L-glycero-beta-D-manno-heptose biosynthesis; ADP-L-glycero-beta-D-manno-heptose from D-glycero-beta-D-manno-heptose 7-phosphate: step 3/4. Catalyzes the phosphorylation of D-glycero-D-manno-heptose 7-phosphate at the C-1 position to selectively form D-glycero-beta-D-manno-heptose-1,7-bisphosphate. In terms of biological role, catalyzes the ADP transfer from ATP to D-glycero-beta-D-manno-heptose 1-phosphate, yielding ADP-D-glycero-beta-D-manno-heptose. The polypeptide is Bifunctional protein HldE (Pseudomonas fluorescens (strain ATCC BAA-477 / NRRL B-23932 / Pf-5)).